The sequence spans 185 residues: Crossover junction endodeoxyribonuclease RuvC (185 aa).

Active-site residues include aspartate 7, glutamate 68, and aspartate 141. The Mg(2+) site is built by aspartate 7, glutamate 68, and aspartate 141.

Belongs to the RuvC family. Homodimer which binds Holliday junction (HJ) DNA. The HJ becomes 2-fold symmetrical on binding to RuvC with unstacked arms; it has a different conformation from HJ DNA in complex with RuvA. In the full resolvosome a probable DNA-RuvA(4)-RuvB(12)-RuvC(2) complex forms which resolves the HJ. Mg(2+) is required as a cofactor.

It localises to the cytoplasm. It catalyses the reaction Endonucleolytic cleavage at a junction such as a reciprocal single-stranded crossover between two homologous DNA duplexes (Holliday junction).. Its function is as follows. The RuvA-RuvB-RuvC complex processes Holliday junction (HJ) DNA during genetic recombination and DNA repair. Endonuclease that resolves HJ intermediates. Cleaves cruciform DNA by making single-stranded nicks across the HJ at symmetrical positions within the homologous arms, yielding a 5'-phosphate and a 3'-hydroxyl group; requires a central core of homology in the junction. The consensus cleavage sequence is 5'-(A/T)TT(C/G)-3'. Cleavage occurs on the 3'-side of the TT dinucleotide at the point of strand exchange. HJ branch migration catalyzed by RuvA-RuvB allows RuvC to scan DNA until it finds its consensus sequence, where it cleaves and resolves the cruciform DNA. The polypeptide is Crossover junction endodeoxyribonuclease RuvC (Mycolicibacterium smegmatis (strain ATCC 700084 / mc(2)155) (Mycobacterium smegmatis)).